The primary structure comprises 1034 residues: MLKTRLKQSRAISRVVRRYACSHPISPNLDKYPVGLKLHGYEVTQTSPIPEFSLTAVSLKHTESGATHLHLDSPNDSNNVFSIAFKTNPPDNTGVPHILEHTTLCGSKKFPVRDPFFKMTNRSLSNFMNAMTGHDYTFYPFATTNSKDFENLMDVYLSSVFEPQLNHTDFLQEGWRIENQNVHDISSKLEFKGVVYNEMKGQYSNSAYYFYIKFLESIYPSLNNSGGDPKKIVDLSYEGLLEFHSKNYHPSNAKTFTYGKLPLEDSLSKISKYYESFEKKVSSVDVKQPIFSTDKSEIFDVTIPGPVDTMNGKETSEQYCTSITWNLGNPLDPNMQYDIFKWKILSSLLFDGHNSPFYQELIESGYGDDFSANTGLDSTTALLSFTVGLNYLTKQKVDNFNEKVMEIINNKIIPELSNEESSSYHGRIDAILHQIEIGFKRHKPDFGFGLLSSIVPSWVNGVDPIDTLQVEKILSHFKEDYKQNGLRIFKELLEKTLCNPHSQKFKFTMEPREDFTKQLVKDENLMIEKRVSELTEDNKKAIYEQNLELAKLQLEDQNTEVLPTLTIDDIPKRGDFYAIDLGQVNKKVVHERVVDTNGLVYANALKDISYLPTKLYKYLPLFNNCLTNLAGTENTPITELETKIQMLTGGITFSSKISTDPYNIEQLKLQYVLSGMALKEKSSSVYDLWLEILTTTKFDTSDEVLEKLSVLIKNMGQNQINNIADRGHSYAAAVSSSKLTPSKYISDIVSGLSQVQFVMELNSKLESEGKEYLAKEIIPILQEIQKYVLQGEFRYRLVGNQEIIVENEKLIEKFDKDISSNRPTLSLTVTDGLSALLNSFNYNHTSENVLVNLPFQVGYSSLGKIGSSYSSKDGASLQILSQLYSFKNLHSKIRESNGAYGGGLTYDGLNGTLNFYSYRDPNPVKSIQTFRDSLSYGLDANWNDKDLQEAKLRVFQSVDAPINISSQGASAFFENIDDYLRQERRENFLGTTLKDLRDVTEKYLVDNQNNLVTVIGDNEILNVDNKWQIRNFQV.

The N-terminal 26 residues, 1 to 26 (MLKTRLKQSRAISRVVRRYACSHPIS), are a transit peptide targeting the mitochondrion. A Zn(2+)-binding site is contributed by H97. Catalysis depends on E100, which acts as the Proton acceptor. Residue H101 coordinates Zn(2+). E173 is a catalytic residue. Position 198 (E198) interacts with Zn(2+).

This sequence belongs to the peptidase M16 family. PreP subfamily. Monomer and homodimer; homodimerization is induced by binding of the substrate. The cofactor is Zn(2+).

Its subcellular location is the mitochondrion intermembrane space. It is found in the mitochondrion matrix. In terms of biological role, degrades mitochondrial transit peptides after their cleavage in the intermembrane space or in the matrix, and presequence peptides; clearance of these peptides is required to keep the presequence processing machinery running. Preferentially cleaves the N-terminal side of paired basic amino acid residues. Also degrades other unstructured peptides. May function as an ATP-dependent peptidase as opposed to a metalloendopeptidase. The chain is Presequence protease, mitochondrial (CYM1) from Candida albicans (strain SC5314 / ATCC MYA-2876) (Yeast).